The primary structure comprises 293 residues: G1/S-specific cyclin-D3 (293 aa).

The 126-residue stretch at 27–152 (VLQSLLRLEE…LVLGKLKWDL (126 aa)) folds into the Cyclin N-terminal domain. The segment at 257 to 293 (REAAQTAPSPVPKAPGGSSSQGPSQTSTPTDVTAIHL) is disordered. Phosphoserine is present on residues Ser-265 and Ser-280. Over residues 271–286 (PGGSSSQGPSQTSTPT) the composition is skewed to low complexity. Phosphothreonine is present on Thr-284.

The protein belongs to the cyclin family. Cyclin D subfamily. Interacts with the CDK4 and CDK6 protein kinases to form a serine/threonine kinase holoenzyme complex. The cyclin subunit imparts substrate specificity to the complex. Interacts with ATF5. Interacts with EIF3K. Component of the ternary complex cyclin D/CDK4/CDKN1B required for nuclear translocation and modulation of CDK4-mediated kinase activity. Can form similar complexes with either CDKN1A or CDKN2A. In terms of processing, phosphorylation at Thr-284 by MAP kinases is required for ubiquitination and degradation by the DCX(AMBRA1) complex. Ubiquitinated by the DCX(AMBRA1) complex during the transition from G1 to S cell phase, leading to its degradation: ubiquitination is dependent on Thr-284 phosphorylation. The DCX(AMBRA1) complex represents the major regulator of CCND3 stability during the G1/S transition. Polyubiquitinated by the SCF(FBXL2) complex, leading to proteasomal degradation.

It localises to the nucleus. Its subcellular location is the cytoplasm. Regulatory component of the cyclin D3-CDK4 (DC) complex that phosphorylates and inhibits members of the retinoblastoma (RB) protein family including RB1 and regulates the cell-cycle during G(1)/S transition. Phosphorylation of RB1 allows dissociation of the transcription factor E2F from the RB/E2F complex and the subsequent transcription of E2F target genes which are responsible for the progression through the G(1) phase. Hypophosphorylates RB1 in early G(1) phase. Cyclin D-CDK4 complexes are major integrators of various mitogenenic and antimitogenic signals. Component of the ternary complex, cyclin D3/CDK4/CDKN1B, required for nuclear translocation and activity of the cyclin D-CDK4 complex. Shows transcriptional coactivator activity with ATF5 independently of CDK4. This Rattus norvegicus (Rat) protein is G1/S-specific cyclin-D3.